The sequence spans 566 residues: DNA ligase B (566 aa).

Residue Lys125 is the N6-AMP-lysine intermediate of the active site.

This sequence belongs to the NAD-dependent DNA ligase family. LigB subfamily.

The enzyme catalyses NAD(+) + (deoxyribonucleotide)n-3'-hydroxyl + 5'-phospho-(deoxyribonucleotide)m = (deoxyribonucleotide)n+m + AMP + beta-nicotinamide D-nucleotide.. Its function is as follows. Catalyzes the formation of phosphodiester linkages between 5'-phosphoryl and 3'-hydroxyl groups in double-stranded DNA using NAD as a coenzyme and as the energy source for the reaction. In Pseudomonas putida (strain GB-1), this protein is DNA ligase B.